Consider the following 165-residue polypeptide: Nucleotide-binding protein NATL1_05371 (165 aa).

It belongs to the YajQ family.

Functionally, nucleotide-binding protein. This chain is Nucleotide-binding protein NATL1_05371, found in Prochlorococcus marinus (strain NATL1A).